Reading from the N-terminus, the 358-residue chain is Bis(monoacylglycero)phosphate synthase CLN5 (358 aa).

Over 1-23 (MAQEVDTAQGAEMRRGAGAARGR) the chain is Cytoplasmic. A helical; Signal-anchor for type II membrane protein membrane pass occupies residues 24–40 (ASWCWALALLWLAVVPG). The Lumenal segment spans residues 41-358 (WSRVSGIPSR…PIRNKTLSGL (318 aa)). 2 disulfides stabilise this stretch: Cys70–Cys159 and Cys77–Cys165. Residue His117 is the Proton acceptor of the active site. Residues Asn130, Asn143, Asn178, and Asn203 are each glycosylated (N-linked (GlcNAc...) asparagine). The active-site Nucleophile; Acyl-thioester intermediate is the Cys231. Asn255, Asn271, and Asn281 each carry an N-linked (GlcNAc...) asparagine glycan. A membrane-anchoring region spans residues 304 to 343 (FLLSLLQIFDAVIVHKQFYLFYNFEYWFLPMKFPFIKITY). Asn352 carries N-linked (GlcNAc...) asparagine glycosylation.

This sequence belongs to the CLN5 family. Multimer. Interacts with SORT1, RAB5A and RAB7A. Interacts with PPT1, TPP1, CLN3, CLN6, CLN8, ATP5F1A and ATP5F1B. Post-translationally, N-glycosylated with both high mannose and complex type sugars. Glycosylation is important for proper folding and trafficking to the lysosomes. The type II membrane signal anchor is proteolytically cleaved to produce a mature form that is transported to the lysosomes (Bis(monoacylglycero)phosphate synthase CLN5, secreted form). In terms of processing, can undergo proteolytic cleavage at the C-terminus, probably by a cysteine protease and may involve the removal of approximately 10-15 residues from the C-terminal end. As to expression, ubiquitous.

The protein resides in the lysosome. Its subcellular location is the membrane. The enzyme catalyses S-hexadecanoyl-L-cysteinyl-[protein] + H2O = L-cysteinyl-[protein] + hexadecanoate + H(+). The catalysed reaction is 2 1-acyl-sn-glycero-3-phospho-(1'-sn-glycerol) = 1-acyl-sn-glycero-3-phospho-(3'-acyl-sn-1'-glycerol) + sn-glycero-3-phospho-(1'-sn-glycerol). It carries out the reaction 2 1-(9Z-octadecenoyl)-sn-glycero-3-phospho-(1'-sn-glycerol) = 1-(9Z-octadecenoyl)-sn-glycero-3-phospho-(3'-(9Z-octadecenoyl)-1'-sn-glycerol) + sn-glycero-3-phospho-(1'-sn-glycerol). It catalyses the reaction 2 1-octadecanoyl-sn-glycero-3-phospho-(1'-sn-glycerol) = 1-octadecanoyl-sn-glycero-3-phospho-(3'-octadecanoyl-1'-sn-glycerol) + sn-glycero-3-phospho-(1'-sn-glycerol). The enzyme catalyses 2 1-hexadecanoyl-sn-glycero-3-phospho-(1'-sn-glycerol) = 1-hexadecanoyl-sn-glycero-3-phospho-(3'-hexadecanoyl-1'-sn-glycerol) + sn-glycero-3-phospho-(1'-sn-glycerol). The catalysed reaction is 2 1-tetradecanoyl-sn-glycero-3-phospho-(1'-sn-glycerol) = 1-tetradecanoyl-sn-glycero-3-phospho-(3'-tetradecanoyl-1'-sn-glycerol) + sn-glycero-3-phospho-(1'-sn-glycerol). Anionic phospholipids activate bis(monoacylglycero)phosphate (BMP) synthase activity. Amiodarone, a cationic amphiphilic drug inhibits BMP synthase activity towards liposomal lysophosphatidylglycerol. Palmostatin B inhibits palmitoyl protein thioesterase activity. Catalyzes the synthesis of bis(monoacylglycero)phosphate (BMP) via transacylation of 2 molecules of lysophosphatidylglycerol (LPG). BMP also known as lysobisphosphatidic acid plays a key role in the formation of intraluminal vesicles and in maintaining intracellular cholesterol homeostasis. Can use only LPG as the exclusive lysophospholipid acyl donor for base exchange and displays BMP synthase activity towards various LPGs (LPG 14:0, LPG 16:0, LPG 18:0, LPG 18:1) with a higher preference for longer chain lengths. Plays a role in influencing the retrograde trafficking of lysosomal sorting receptors SORT1 and IGF2R from the endosomes to the trans-Golgi network by controlling the recruitment of retromer complex to the endosomal membrane. Regulates the localization and activation of RAB7A which is required to recruit the retromer complex to the endosomal membrane. In terms of biological role, exhibits palmitoyl protein thioesterase (S-depalmitoylation) activity in vitro and most likely plays a role in protein S-depalmitoylation. The chain is Bis(monoacylglycero)phosphate synthase CLN5 (CLN5) from Homo sapiens (Human).